The following is a 137-amino-acid chain: Molluscan insulin-related peptide 2 (137 aa).

The N-terminal stretch at M1–G31 is a signal peptide. Q32 carries the post-translational modification Pyrrolidone carboxylic acid. Disulfide bonds link C47–C123, C59–C136, and C122–C127. Positions D71–V83 are cleaved as a propeptide — C-beta peptide like. A propeptide spans N86–T110 (C-alpha peptide like). Q113 carries the pyrrolidone carboxylic acid modification.

This sequence belongs to the insulin family. In terms of assembly, heterodimer of a B chain and an A chain linked by two disulfide bonds. As to expression, expressed in the cerebral light-green cells which are giant neuroendocrines cells involved in the control of growth.

The protein resides in the cytoplasmic vesicle. Its subcellular location is the secretory vesicle. In Lymnaea stagnalis (Great pond snail), this protein is Molluscan insulin-related peptide 2.